A 494-amino-acid polypeptide reads, in one-letter code: Glutamyl-tRNA(Gln) amidotransferase subunit A (494 aa).

Catalysis depends on charge relay system residues Lys-80 and Ser-160. The interval 140 to 168 is disordered; sequence GNVISPWRRPGDTAPLAPGGSSGGSSSAV. Ser-184 acts as the Acyl-ester intermediate in catalysis.

This sequence belongs to the amidase family. GatA subfamily. As to quaternary structure, heterotrimer of A, B and C subunits.

The catalysed reaction is L-glutamyl-tRNA(Gln) + L-glutamine + ATP + H2O = L-glutaminyl-tRNA(Gln) + L-glutamate + ADP + phosphate + H(+). In terms of biological role, allows the formation of correctly charged Gln-tRNA(Gln) through the transamidation of misacylated Glu-tRNA(Gln) in organisms which lack glutaminyl-tRNA synthetase. The reaction takes place in the presence of glutamine and ATP through an activated gamma-phospho-Glu-tRNA(Gln). The sequence is that of Glutamyl-tRNA(Gln) amidotransferase subunit A from Novosphingobium aromaticivorans (strain ATCC 700278 / DSM 12444 / CCUG 56034 / CIP 105152 / NBRC 16084 / F199).